Here is a 262-residue protein sequence, read N- to C-terminus: LysM domain-containing protein ARB_03438 (262 aa).

The N-terminal stretch at 1–22 is a signal peptide; the sequence is MVSIPLILGAIILLGTRKAATA. Positions 31-75 constitute a LysM 1 domain; the sequence is FAVTAATDDTCQSLGAQWGIGMAQFLKWNPGVNCNALVAGKTYCL. The interval 85–112 is disordered; that stretch reads TASLTPSPQVPTTSRATQTMTSKASTGT. Residues 86-112 show a composition bias toward polar residues; it reads ASLTPSPQVPTTSRATQTMTSKASTGT. Residues 132-179 enclose the LysM 2 domain; sequence FYHPVSPGDTCQSIVDRYKAFTLDQFYTWNPSVGKNCESLWLGYYVCT. A disordered region spans residues 184–240; that stretch reads GPNSPSQQPPSQQPPSQQSPSQQSPSQQSPSQQPPSQQPPSQQPPSQQSNTSQQTQP. Positions 197 to 214 are enriched in low complexity; that stretch reads PPSQQSPSQQSPSQQSPS. Residues 215–226 are compositionally biased toward pro residues; it reads QQPPSQQPPSQQ. Over residues 227–240 the composition is skewed to low complexity; that stretch reads PPSQQSNTSQQTQP. A glycan (N-linked (GlcNAc...) asparagine) is linked at asparagine 233.

The protein resides in the secreted. Might have a role in sequestration of chitin oligosaccharides (breakdown products of fungal cell walls that are released during invasion and act as triggers of host immunity) to dampen host defense. The chain is LysM domain-containing protein ARB_03438 from Arthroderma benhamiae (strain ATCC MYA-4681 / CBS 112371) (Trichophyton mentagrophytes).